A 400-amino-acid polypeptide reads, in one-letter code: Probable vacuolar protease A (400 aa).

The signal sequence occupies residues 1–18 (MKGSLLLAGATLLGCTSA). The propeptide at 19 to 72 (KLHSLKLKKVSLKEQLEHADIDVQIKSLGQKYMGIRPEQHEQQMFKEQTPIEVE) is activation peptide. Positions 87–397 (YFSEISIGTP…DLGKGTVGLA (311 aa)) constitute a Peptidase A1 domain. Asp-105 is a catalytic residue. A disulfide bridge connects residues Cys-118 and Cys-123. The N-linked (GlcNAc...) asparagine glycan is linked to Asn-140. Asp-289 is an active-site residue. Residues Cys-323 and Cys-356 are joined by a disulfide bond. The N-linked (GlcNAc...) asparagine glycan is linked to Asn-340.

The protein belongs to the peptidase A1 family.

It localises to the vacuole lumen. The protein resides in the secreted. It catalyses the reaction Hydrolysis of proteins with broad specificity for peptide bonds. Cleaves -Leu-Leu-|-Val-Tyr- bond in a synthetic substrate. Does not act on esters of Tyr or Arg.. Its function is as follows. Vacuolar aspartic endopeptidase which is probably also secreted and contributes to virulence. This is Probable vacuolar protease A (PEP2) from Arthroderma benhamiae (strain ATCC MYA-4681 / CBS 112371) (Trichophyton mentagrophytes).